A 349-amino-acid polypeptide reads, in one-letter code: N-acetyltaurine hydrolase (349 aa).

The a divalent metal cation site is built by histidine 26, histidine 28, glutamate 169, histidine 201, histidine 230, and aspartate 298.

The protein belongs to the metallo-dependent hydrolases superfamily. Phosphotriesterase family. It depends on a divalent metal cation as a cofactor.

It is found in the cytoplasm. Its subcellular location is the cytosol. The catalysed reaction is N-acetyltaurine + H2O = taurine + acetate. The enzyme catalyses N-propanoyltaurine + H2O = propanoate + taurine. It catalyses the reaction N-acetyl-L-methionine + H2O = L-methionine + acetate. It carries out the reaction N-acetyl-L-isoleucine + H2O = L-isoleucine + acetate. The catalysed reaction is N-acetyl-L-leucine + H2O = L-leucine + acetate. The enzyme catalyses N-acetyl-L-valine + H2O = L-valine + acetate. In terms of biological role, N-acetyltaurine hydrolase that regulates feeding by catalyzing the hydrolysis of N-acetyltaurine into taurine and acetate. N-acetyltaurine has anorexigenic and anti-obesity effects that are dependent on GFRAL receptor and GDF15. PTER also acts on other N-acetyl amino acids (Met, Ile, Leu, Val) and N-propionyltaurine, but at lower rates. This Pongo abelii (Sumatran orangutan) protein is N-acetyltaurine hydrolase.